The following is a 56-amino-acid chain: Large ribosomal subunit protein bL32c (56 aa).

The protein belongs to the bacterial ribosomal protein bL32 family.

It is found in the plastid. It localises to the chloroplast. The polypeptide is Large ribosomal subunit protein bL32c (Huperzia lucidula (Shining clubmoss)).